The primary structure comprises 299 residues: MAQNLKDLAGRLPAGPRGMGTALKLLLGAGAVAYGVRESVFTVEGGHRAIFFNRIGGVQQDTILAEGLHFRIPWFQYPIIYDIRARPRKISSPTGSKDLQMVNISLRVLSRPNAQELPSMYQRLGLDYEERVLPSIVNEVLKSVVAKFNASQLITQRAQVSLLIRRELTERAKDFSLILDDVAITELSFSREYTAAVEAKQVAQQEAQRAQFLVEKAKQEQRQKIVQAEGEAEAAKMLGEALSKNPGYIKLRKIRAAQNISKTIATSQNRIYLTADNLVLNLQDESFTRGSDSLIKGKK.

The residue at position 2 (A2) is an N-acetylalanine. The necessary for transcriptional repression stretch occupies residues 19 to 49; that stretch reads MGTALKLLLGAGAVAYGVRESVFTVEGGHRA. The residue at position 128 (Y128) is a Phosphotyrosine. Position 147 is an N6-acetyllysine (K147). The necessary for transcriptional repression stretch occupies residues 150-174; sequence ASQLITQRAQVSLLIRRELTERAKD. S151 carries the post-translational modification Phosphoserine. Residues 190 to 238 are a coiled coil; that stretch reads SREYTAAVEAKQVAQQEAQRAQFLVEKAKQEQRQKIVQAEGEAEAAKML. Residues K200, K236, K250, and K262 each carry the N6-acetyllysine modification.

Belongs to the prohibitin family. As to quaternary structure, the mitochondrial prohibitin complex consists of two subunits (PHB1 and PHB2), assembled into a membrane-associated ring-shaped supercomplex of approximately 1 mDa. Interacts with ESR1, HDAC1 and HDAC5. Interacts with ZNF703. Interacts with STOML2. Interacts with ARFGEF3. Interacts with SPHK2. Interacts with COX4I1; the interaction associates PHB2 with COX. Interacts with MAP1LC3B (membrane-bound form LC3-II); the interaction is direct and upon mitochondrial depolarization and proteasome-dependent outer membrane rupture. Interacts with IGFBP6 (via C-terminal domain). Interacts with CLPB. Interacts with CD86 (via cytoplasmic domain); the interactions increases after priming with CD40. Interacts with AFG3L2. Interacts with DNAJC19. Interacts with AKT2; this interaction may be important for myogenic differentiation. Phosphorylated. Tyrosine phosphorylation is indirectly stimulated by IGFBP6. In terms of tissue distribution, widely expressed in different tissues.

Its subcellular location is the mitochondrion inner membrane. It is found in the cytoplasm. The protein resides in the nucleus. The protein localises to the cell membrane. Functionally, protein with pleiotropic attributes mediated in a cell-compartment- and tissue-specific manner, which include the plasma membrane-associated cell signaling functions, mitochondrial chaperone, and transcriptional co-regulator of transcription factors and sex steroid hormones in the nucleus. In terms of biological role, in the mitochondria, together with PHB, forms large ring complexes (prohibitin complexes) in the inner mitochondrial membrane (IMM) and functions as a chaperone protein that stabilizes mitochondrial respiratory enzymes and maintains mitochondrial integrity in the IMM, which is required for mitochondrial morphogenesis, neuronal survival, and normal lifespan. The prohibitin complex, with DNAJC19, regulates cardiolipin remodeling and the protein turnover of OMA1 in a cardiolipin-binding manner. Also regulates cytochrome-c oxidase assembly (COX) and mitochondrial respiration. Binding to sphingoid 1-phosphate (SPP) modulates its regulator activity. Has a key role of mitophagy receptor involved in targeting mitochondria for autophagic degradation. Involved in mitochondrial-mediated antiviral innate immunity, activates RIG-I-mediated signal transduction and production of IFNB1 and pro-inflammatory cytokine IL6. In the nucleus, serves as transcriptional co-regulator. Acts as a mediator of transcriptional repression by nuclear hormone receptors via recruitment of histone deacetylases. Functions as an estrogen receptor (ER)-selective coregulator that potentiates the inhibitory activities of antiestrogens and represses the activity of estrogens. Competes with NCOA1 for modulation of ER transcriptional activity. Its function is as follows. In the plasma membrane, is involved in IGFBP6-induced cell migration. Cooperates with CD86 to mediate CD86-signaling in B lymphocytes that regulates the level of IgG1 produced through the activation of distal signaling intermediates. Upon CD40 engagement, required to activate NF-kappa-B signaling pathway via phospholipase C and protein kinase C activation. This chain is Prohibitin-2, found in Mus musculus (Mouse).